The primary structure comprises 306 residues: MNDRTEAVKAYLLDLQDRICAALEVEDGGARFVEDAWTRPGGGGGRTRVIENGALIEKGGVNFSHVHGDSLPPSASAHRPELAGRSFEALGVSLVIHPHNPYVPTSHANVRFFIAEKDGEEPVWWFGGGFDLTPYYGAEEDCVHWHRVARDACAPFGAEVYPRYKEWCDRYFHIKHRNEPRGVGGLFFDDLNQWDFDTSFAFMRAVGDAYLQAYLPIVQRRKATPFGERERQFQLLRRGRYVEYNLVYDRGTLFGLQSGGRTESILMSLPPQVAWGYDKRPEPGSPEARLTEYFLQDRDWLAAAPA.

Substrate is bound at residue S93. 2 residues coordinate a divalent metal cation: H97 and H107. The Proton donor role is filled by H107. Substrate is bound at residue 109-111 (NVR). A divalent metal cation-binding residues include H146 and H176. The interval 241 to 276 (YVEYNLVYDRGTLFGLQSGGRTESILMSLPPQVAWG) is important for dimerization. 259–261 (GGR) is a substrate binding site.

It belongs to the aerobic coproporphyrinogen-III oxidase family. Homodimer. Requires a divalent metal cation as cofactor.

The protein resides in the cytoplasm. It carries out the reaction coproporphyrinogen III + O2 + 2 H(+) = protoporphyrinogen IX + 2 CO2 + 2 H2O. It functions in the pathway porphyrin-containing compound metabolism; protoporphyrin-IX biosynthesis; protoporphyrinogen-IX from coproporphyrinogen-III (O2 route): step 1/1. In terms of biological role, involved in the heme biosynthesis. Catalyzes the aerobic oxidative decarboxylation of propionate groups of rings A and B of coproporphyrinogen-III to yield the vinyl groups in protoporphyrinogen-IX. The protein is Oxygen-dependent coproporphyrinogen-III oxidase of Stutzerimonas stutzeri (strain A1501) (Pseudomonas stutzeri).